We begin with the raw amino-acid sequence, 187 residues long: Meiotically up-regulated gene 155 protein (187 aa).

The interval 1-24 is disordered; that stretch reads MRPTSGCSKDDTIQKQNRRHNTVD. 2 consecutive transmembrane segments (helical) span residues 83-105 and 163-183; these read IISY…PFSH and VMLT…LFIF.

The protein resides in the cytoplasm. Its subcellular location is the nucleus membrane. In terms of biological role, has a role in meiosis. The chain is Meiotically up-regulated gene 155 protein (mug155) from Schizosaccharomyces pombe (strain 972 / ATCC 24843) (Fission yeast).